Here is a 472-residue protein sequence, read N- to C-terminus: Eukaryotic translation initiation factor 2 subunit 3 (472 aa).

An N-acetylalanine modification is found at alanine 2. Serine 16 is subject to Phosphoserine. Positions 39-248 (QATINIGTIG…IVKKIPVPPR (210 aa)) constitute a tr-type G domain. The G1 stretch occupies residues 48 to 55 (GHVAHGKS). 51–56 (AHGKST) lines the GTP pocket. The tract at residues 76–80 (NITIK) is G2. A G3 region spans residues 134–137 (DCPG). GTP contacts are provided by residues 190 to 193 (NKID) and 225 to 227 (SAQ). The G4 stretch occupies residues 190–193 (NKID). Residues 225 to 227 (SAQ) are G5. The segment at 457–469 (GQIRRGVTIKPTV) is interacts with CDC123.

The protein belongs to the TRAFAC class translation factor GTPase superfamily. Classic translation factor GTPase family. EIF2G subfamily. As to quaternary structure, eukaryotic translation initiation factor 2 eIF2 is a heterotrimeric complex composed of an alpha (EIF2S1), a beta (EIF2S2) and a gamma (EIF2S3) chain. eIF2 is member of the 43S pre-initiation complex (43S PIC). Interacts (via C-terminus) with CDC123; the interaction is direct.

The protein localises to the cytoplasm. It localises to the cytosol. It catalyses the reaction GTP + H2O = GDP + phosphate + H(+). Its function is as follows. Member of the eIF2 complex that functions in the early steps of protein synthesis by forming a ternary complex with GTP and initiator tRNA. This complex binds to a 40S ribosomal subunit, followed by mRNA binding to form the 43S pre-initiation complex (43S PIC). Junction of the 60S ribosomal subunit to form the 80S initiation complex is preceded by hydrolysis of the GTP bound to eIF2 and release of an eIF2-GDP binary complex. In order for eIF2 to recycle and catalyze another round of initiation, the GDP bound to eIF2 must exchange with GTP by way of a reaction catalyzed by eIF-2B. This Sus scrofa (Pig) protein is Eukaryotic translation initiation factor 2 subunit 3 (EIF2S3).